A 310-amino-acid chain; its full sequence is HPr kinase/phosphorylase (310 aa).

Residues histidine 136 and lysine 157 contribute to the active site. 151-158 (GDSGIGKS) lines the ATP pocket. Residue serine 158 coordinates Mg(2+). Residue aspartate 175 is the Proton acceptor; for phosphorylation activity. Proton donor; for dephosphorylation activity of the active site. An important for the catalytic mechanism of both phosphorylation and dephosphorylation region spans residues 199-208 (LEIRGLGIIN). Glutamate 200 contacts Mg(2+). Residue arginine 241 is part of the active site. The important for the catalytic mechanism of dephosphorylation stretch occupies residues 262-267 (PVRPGR).

The protein belongs to the HPrK/P family. Homohexamer. Mg(2+) is required as a cofactor.

The catalysed reaction is [HPr protein]-L-serine + ATP = [HPr protein]-O-phospho-L-serine + ADP + H(+). It catalyses the reaction [HPr protein]-O-phospho-L-serine + phosphate + H(+) = [HPr protein]-L-serine + diphosphate. Its function is as follows. Catalyzes the ATP- as well as the pyrophosphate-dependent phosphorylation of a specific serine residue in HPr, a phosphocarrier protein of the phosphoenolpyruvate-dependent sugar phosphotransferase system (PTS). HprK/P also catalyzes the pyrophosphate-producing, inorganic phosphate-dependent dephosphorylation (phosphorolysis) of seryl-phosphorylated HPr (P-Ser-HPr). The two antagonistic activities of HprK/P are regulated by several intracellular metabolites, which change their concentration in response to the absence or presence of rapidly metabolisable carbon sources (glucose, fructose, etc.) in the growth medium. Therefore, by controlling the phosphorylation state of HPr, HPrK/P is a sensor enzyme that plays a major role in the regulation of carbon metabolism and sugar transport: it mediates carbon catabolite repression (CCR), and regulates PTS-catalyzed carbohydrate uptake and inducer exclusion. The sequence is that of HPr kinase/phosphorylase from Staphylococcus epidermidis (strain ATCC 35984 / DSM 28319 / BCRC 17069 / CCUG 31568 / BM 3577 / RP62A).